Consider the following 245-residue polypeptide: Probable phosphatase CKO_02035 (245 aa).

The Zn(2+) site is built by His7, His9, His15, His40, Glu73, His101, His131, Asp192, and His194.

The protein belongs to the PHP family. Homotrimer. It depends on Zn(2+) as a cofactor.

The chain is Probable phosphatase CKO_02035 from Citrobacter koseri (strain ATCC BAA-895 / CDC 4225-83 / SGSC4696).